The primary structure comprises 862 residues: Probable glutaminase ARB_05535/05536 (862 aa).

A signal peptide spans 1–19; sequence MLSWVLLAWAVACSALAGA. Asn106, Asn273, Asn436, Asn448, Asn486, Asn610, and Asn744 each carry an N-linked (GlcNAc...) asparagine glycan. Residues 798–862 form a disordered region; the sequence is FLDDKDNNSP…SQMTIVNEND (65 aa). The segment covering 853 to 862 has biased composition (polar residues); that stretch reads SQMTIVNEND.

Belongs to the fungal glutaminase gtaA family.

Its subcellular location is the secreted. The catalysed reaction is L-glutamine + H2O = L-glutamate + NH4(+). In terms of biological role, glutaminase catalyzes the hydrolysis of glutamine to glutamic acid and plays a key role in nitrogen metabolism. The sequence is that of Probable glutaminase ARB_05535/05536 from Arthroderma benhamiae (strain ATCC MYA-4681 / CBS 112371) (Trichophyton mentagrophytes).